Here is a 469-residue protein sequence, read N- to C-terminus: Tubulin gamma-2 chain (469 aa).

GTP is bound at residue 142–148 (AGGTGSG).

This sequence belongs to the tubulin family.

It is found in the cytoplasm. Its subcellular location is the cytoskeleton. The protein localises to the microtubule organizing center. In terms of biological role, tubulin is the major constituent of microtubules. The gamma chain is found at microtubule organizing centers (MTOC) such as the spindle poles, suggesting that it is involved in the minus-end nucleation of microtubule assembly. The chain is Tubulin gamma-2 chain (TUBG2) from Oryza sativa subsp. japonica (Rice).